We begin with the raw amino-acid sequence, 251 residues long: B3 domain-containing protein At2g24670 (251 aa).

The segment at 48-111 (TTPSTVMESK…SSKTREPTPG (64 aa)) is disordered. Positions 56 to 70 (SKSHIHDHSLRESPT) are enriched in basic and acidic residues. Residues 153–249 (VSQIVELEFL…TLYFALVPLY (97 aa)) constitute a DNA-binding region (TF-B3).

It is found in the nucleus. In Arabidopsis thaliana (Mouse-ear cress), this protein is B3 domain-containing protein At2g24670.